The chain runs to 651 residues: Far upstream element-binding protein 1 (651 aa).

2 disordered regions span residues 1–24 and 40–92; these read MADY…GVVN and KIGG…HQQQ. Ala-2 is modified (N-acetylalanine). Phosphoserine is present on residues Ser-48 and Ser-51. Positions 61 to 73 are enriched in basic and acidic residues; sequence RPLEDGDQPDAKK. 3 consecutive KH domains span residues 96-160, 181-247, and 271-335; these read VMTE…KRLL, NAVQ…KEMV, and NEGI…AEII. Residue Ser-136 is modified to Phosphoserine. A Phosphothreonine modification is found at Thr-149. 4 positions are modified to omega-N-methylarginine: Arg-317, Arg-355, Arg-357, and Arg-359. Positions 372–439 constitute a KH 4 domain; that stretch reads LQEFNFIVPT…QQIDYARQLI (68 aa). Residue Ser-411 is modified to Phosphoserine. The residue at position 428 (Thr-428) is a Phosphothreonine. Disordered stretches follow at residues 443–528, 545–574, and 625–651; these read IGGP…GADP, AQPP…APAG, and TSPQ…HHLY. Positions 464 to 501 are enriched in pro residues; it reads PHGPPGPPGPGTPMGPYNPAPYNPGPPGPAPHGPPAPY. Composition is skewed to low complexity over residues 514–528 and 552–574; these read QQQA…GADP and PAGA…APAG. Residue Ser-626 is modified to Phosphoserine.

As to quaternary structure, found in a complex with PUF60 and far upstream element (FUSE) DNA segment. Interacts with PUF60 and JTV1. In terms of processing, ubiquitinated. This targets the protein for proteasome-mediated degradation.

The protein resides in the nucleus. In terms of biological role, regulates MYC expression by binding to a single-stranded far-upstream element (FUSE) upstream of the MYC promoter. May act both as activator and repressor of transcription. The protein is Far upstream element-binding protein 1 (Fubp1) of Mus musculus (Mouse).